The following is a 173-amino-acid chain: NADH-quinone oxidoreductase subunit 6 (173 aa).

Cys-53, Cys-54, Cys-118, and Cys-148 together coordinate [4Fe-4S] cluster.

This sequence belongs to the complex I 20 kDa subunit family. As to quaternary structure, NDH-1 is composed of at least 14 different subunits, Nqo1 to Nqo14. The complex has a L-shaped structure, with the hydrophobic arm (subunits Nqo7, Nqo8, Nqo10 to Nqo14) embedded in the inner membrane and the hydrophilic peripheral arm (subunits Nqo1 to Nqo6, Nqo9) protruding into the bacterial cytoplasm. The hydrophilic domain contains all the redox centers. Requires [4Fe-4S] cluster as cofactor.

It localises to the cell inner membrane. It catalyses the reaction a quinone + NADH + 5 H(+)(in) = a quinol + NAD(+) + 4 H(+)(out). Functionally, NDH-1 shuttles electrons from NADH, via FMN and iron-sulfur (Fe-S) centers, to quinones in the respiratory chain. The immediate electron acceptor for the enzyme in this species is believed to be ubiquinone. Couples the redox reaction to proton translocation (for every two electrons transferred, four hydrogen ions are translocated across the cytoplasmic membrane), and thus conserves the redox energy in a proton gradient. The sequence is that of NADH-quinone oxidoreductase subunit 6 (nqo6) from Paracoccus denitrificans.